A 137-amino-acid chain; its full sequence is Large ribosomal subunit protein uL16 (137 aa).

Basic residues predominate over residues 1–17; the sequence is MLQPKRTKFRKQMKGRN. The tract at residues 1–22 is disordered; that stretch reads MLQPKRTKFRKQMKGRNRGLAQ.

It belongs to the universal ribosomal protein uL16 family. In terms of assembly, part of the 50S ribosomal subunit.

Its function is as follows. Binds 23S rRNA and is also seen to make contacts with the A and possibly P site tRNAs. The polypeptide is Large ribosomal subunit protein uL16 (Teredinibacter turnerae (strain ATCC 39867 / T7901)).